A 397-amino-acid polypeptide reads, in one-letter code: Argininosuccinate synthase (397 aa).

ATP is bound at residue 7–15; it reads LYSGGLDTS. Tyr-83 serves as a coordination point for L-citrulline. Gly-113 is a binding site for ATP. Residues Thr-115, Asn-119, and Asp-120 each coordinate L-aspartate. Asn-119 is a binding site for L-citrulline. Residues Arg-123, Ser-169, Ser-178, Glu-253, and Tyr-265 each coordinate L-citrulline.

It belongs to the argininosuccinate synthase family. Type 1 subfamily. In terms of assembly, homotetramer.

The protein resides in the cytoplasm. The enzyme catalyses L-citrulline + L-aspartate + ATP = 2-(N(omega)-L-arginino)succinate + AMP + diphosphate + H(+). It functions in the pathway amino-acid biosynthesis; L-arginine biosynthesis; L-arginine from L-ornithine and carbamoyl phosphate: step 2/3. This Thermoplasma volcanium (strain ATCC 51530 / DSM 4299 / JCM 9571 / NBRC 15438 / GSS1) protein is Argininosuccinate synthase.